The following is a 449-amino-acid chain: UDP-N-acetylmuramate--L-alanine ligase (449 aa).

121–127 (GAHGKSS) provides a ligand contact to ATP.

It belongs to the MurCDEF family.

It is found in the cytoplasm. The catalysed reaction is UDP-N-acetyl-alpha-D-muramate + L-alanine + ATP = UDP-N-acetyl-alpha-D-muramoyl-L-alanine + ADP + phosphate + H(+). The protein operates within cell wall biogenesis; peptidoglycan biosynthesis. Its function is as follows. Cell wall formation. The chain is UDP-N-acetylmuramate--L-alanine ligase from Helicobacter pylori (strain ATCC 700392 / 26695) (Campylobacter pylori).